The sequence spans 367 residues: Phosphoribosylaminoimidazole-succinocarboxamide synthase (367 aa).

Belongs to the SAICAR synthetase family.

The enzyme catalyses 5-amino-1-(5-phospho-D-ribosyl)imidazole-4-carboxylate + L-aspartate + ATP = (2S)-2-[5-amino-1-(5-phospho-beta-D-ribosyl)imidazole-4-carboxamido]succinate + ADP + phosphate + 2 H(+). Its pathway is purine metabolism; IMP biosynthesis via de novo pathway; 5-amino-1-(5-phospho-D-ribosyl)imidazole-4-carboxamide from 5-amino-1-(5-phospho-D-ribosyl)imidazole-4-carboxylate: step 1/2. In Aeromonas salmonicida (strain A449), this protein is Phosphoribosylaminoimidazole-succinocarboxamide synthase.